The primary structure comprises 351 residues: UDP-N-acetylglucosamine--N-acetylmuramyl-(pentapeptide) pyrophosphoryl-undecaprenol N-acetylglucosamine transferase (351 aa).

UDP-N-acetyl-alpha-D-glucosamine-binding positions include 13-15, Asn125, Arg161, Ser189, Ile241, 260-265, and Gln285; these read TGG and ALTVCE.

This sequence belongs to the glycosyltransferase 28 family. MurG subfamily.

Its subcellular location is the cell inner membrane. It carries out the reaction di-trans,octa-cis-undecaprenyl diphospho-N-acetyl-alpha-D-muramoyl-L-alanyl-D-glutamyl-meso-2,6-diaminopimeloyl-D-alanyl-D-alanine + UDP-N-acetyl-alpha-D-glucosamine = di-trans,octa-cis-undecaprenyl diphospho-[N-acetyl-alpha-D-glucosaminyl-(1-&gt;4)]-N-acetyl-alpha-D-muramoyl-L-alanyl-D-glutamyl-meso-2,6-diaminopimeloyl-D-alanyl-D-alanine + UDP + H(+). It participates in cell wall biogenesis; peptidoglycan biosynthesis. In terms of biological role, cell wall formation. Catalyzes the transfer of a GlcNAc subunit on undecaprenyl-pyrophosphoryl-MurNAc-pentapeptide (lipid intermediate I) to form undecaprenyl-pyrophosphoryl-MurNAc-(pentapeptide)GlcNAc (lipid intermediate II). The chain is UDP-N-acetylglucosamine--N-acetylmuramyl-(pentapeptide) pyrophosphoryl-undecaprenol N-acetylglucosamine transferase from Haemophilus influenzae (strain PittGG).